An 869-amino-acid polypeptide reads, in one-letter code: Valine--tRNA ligase (869 aa).

The 'HIGH' region motif lies at 47-57 (PYPTGNFHIGN). Positions 521-525 (KMSKS) match the 'KMSKS' region motif. ATP is bound at residue Lys-524.

It belongs to the class-I aminoacyl-tRNA synthetase family. ValS type 2 subfamily.

The protein localises to the cytoplasm. It catalyses the reaction tRNA(Val) + L-valine + ATP = L-valyl-tRNA(Val) + AMP + diphosphate. Catalyzes the attachment of valine to tRNA(Val). As ValRS can inadvertently accommodate and process structurally similar amino acids such as threonine, to avoid such errors, it has a 'posttransfer' editing activity that hydrolyzes mischarged Thr-tRNA(Val) in a tRNA-dependent manner. This chain is Valine--tRNA ligase, found in Methanosarcina mazei (strain ATCC BAA-159 / DSM 3647 / Goe1 / Go1 / JCM 11833 / OCM 88) (Methanosarcina frisia).